A 184-amino-acid polypeptide reads, in one-letter code: Oligoribonuclease (184 aa).

In terms of domain architecture, Exonuclease spans 8–169; sequence LIWIDLEMTG…EDIHESIIEL (162 aa). Y129 is an active-site residue.

The protein belongs to the oligoribonuclease family.

The protein resides in the cytoplasm. 3'-to-5' exoribonuclease specific for small oligoribonucleotides. This Buchnera aphidicola subsp. Schizaphis graminum (strain Sg) protein is Oligoribonuclease.